The chain runs to 122 residues: Putative cryptic phosphonate transport system permease protein PhnE2 (122 aa).

Residues 1–114 (MLALFIHTTG…VTVSLLDFLS (114 aa)) enclose the ABC transmembrane type-1 domain. A run of 4 helical transmembrane segments spans residues 3–23 (ALFI…VEAI), 39–59 (LEEI…SYSL), 68–88 (SATV…WEAI), and 93–113 (FQQT…LDFL).

It belongs to the binding-protein-dependent transport system permease family. As to quaternary structure, if the reading frame is restored, the complex is composed of two ATP-binding proteins (PhnC), two transmembrane proteins (PhnE) and a solute-binding protein (PhnD).

The protein localises to the cell inner membrane. C-terminal fragment of the PhnE protein, part of a phosphonate usage operon that is cryptic in K12 strains. Growth of K12 strains on phosphonate can be observed when it is used as the sole phosphorus source after a 60 hour lag period, suggesting the operon is activated. An intact PhnE in strain B is (AC A0A140NFA3). Part of the binding-protein-dependent transport system for phosphonates; probably responsible for the translocation of the substrate across the membrane. The polypeptide is Putative cryptic phosphonate transport system permease protein PhnE2 (phnE) (Escherichia coli (strain K12)).